Here is a 302-residue protein sequence, read N- to C-terminus: Sulfate adenylyltransferase subunit 2 (302 aa).

The segment at 279-302 is disordered; it reads ERQGRAIDHDSSGSMELKKRQGYF. Basic and acidic residues predominate over residues 280 to 302; the sequence is RQGRAIDHDSSGSMELKKRQGYF.

This sequence belongs to the PAPS reductase family. CysD subfamily. As to quaternary structure, heterodimer composed of CysD, the smaller subunit, and CysN.

The enzyme catalyses sulfate + ATP + H(+) = adenosine 5'-phosphosulfate + diphosphate. Its pathway is sulfur metabolism; hydrogen sulfide biosynthesis; sulfite from sulfate: step 1/3. In terms of biological role, with CysN forms the ATP sulfurylase (ATPS) that catalyzes the adenylation of sulfate producing adenosine 5'-phosphosulfate (APS) and diphosphate, the first enzymatic step in sulfur assimilation pathway. APS synthesis involves the formation of a high-energy phosphoric-sulfuric acid anhydride bond driven by GTP hydrolysis by CysN coupled to ATP hydrolysis by CysD. The sequence is that of Sulfate adenylyltransferase subunit 2 from Aliivibrio fischeri (strain ATCC 700601 / ES114) (Vibrio fischeri).